A 260-amino-acid polypeptide reads, in one-letter code: Tryptophan synthase alpha chain (260 aa).

Residues Glu52 and Asp63 each act as proton acceptor in the active site.

The protein belongs to the TrpA family. As to quaternary structure, tetramer of two alpha and two beta chains.

It catalyses the reaction (1S,2R)-1-C-(indol-3-yl)glycerol 3-phosphate + L-serine = D-glyceraldehyde 3-phosphate + L-tryptophan + H2O. It functions in the pathway amino-acid biosynthesis; L-tryptophan biosynthesis; L-tryptophan from chorismate: step 5/5. Functionally, the alpha subunit is responsible for the aldol cleavage of indoleglycerol phosphate to indole and glyceraldehyde 3-phosphate. The polypeptide is Tryptophan synthase alpha chain (Streptococcus thermophilus (strain ATCC BAA-491 / LMD-9)).